Consider the following 608-residue polypeptide: Epsin-3 (608 aa).

Residues Arg8, Lys11, Arg25, Asn30, Arg63, and His73 each contribute to the a 1,2-diacyl-sn-glycero-3-phospho-(1D-myo-inositol-4,5-bisphosphate) site. In terms of domain architecture, ENTH spans 12–144 (NIVHNYSEAE…KDEERLRQER (133 aa)). Disordered stretches follow at residues 150 to 266 (TKER…QSSI) and 281 to 475 (STHC…GPSA). Positions 174 to 189 (GSPSSYTSASSSPRYA) are enriched in low complexity. Residues Ser184 and Ser185 each carry the phosphoserine modification. The region spanning 202-221 (EEELQLQLALAMSREEAEKG) is the UIM domain. Composition is skewed to basic and acidic residues over residues 214-229 (SREEAEKGGRSWKGDD) and 240-260 (GQRRRDREPEREERKEEEKLK). 7 consecutive repeat copies span residues 287–289 (DPW), 310–312 (DPW), 337–339 (EPW), 353–355 (DPW), 370–372 (DPW), 495–497 (NPF), and 508–510 (NPF). The segment at 287 to 372 (DPWDIPGLRP…KLPSTGVDPW (86 aa)) is 5 X 3 AA repeats of [DE]-P-W. Pro residues predominate over residues 346–363 (PSGPPITDPWAPSSPTPK). The interval 495–607 (NPFLTGLSAP…LPPQAGTNPF (113 aa)) is 3 X 3 AA repeats of N-P-F. 2 disordered regions span residues 498 to 530 (LTGLSAPSPTNPFGAGEQGRPTLNQMRTGSPAL) and 575 to 608 (GAFAPPPASLPQPLLPTSDPVGPLPPQAGTNPFL). Over residues 578–588 (APPPASLPQPL) the composition is skewed to pro residues. The stretch at 605–607 (NPF) is repeat 3.

The protein belongs to the epsin family.

It is found in the cytoplasm. It localises to the cell cortex. The protein localises to the perinuclear region. The protein resides in the cytoplasmic vesicle. Its subcellular location is the clathrin-coated vesicle. It is found in the nucleus. This chain is Epsin-3 (Epn3), found in Rattus norvegicus (Rat).